Reading from the N-terminus, the 365-residue chain is N5-carboxyaminoimidazole ribonucleotide synthase (365 aa).

ATP-binding positions include Arg93, Lys132, 137 to 143, 168 to 171, Glu176, His199, and 249 to 250; these read GYDGKGQ, EEFV, and NE. Positions 97 to 279 constitute an ATP-grasp domain; sequence KLFLKKHGFP…QFENLLRAIT (183 aa).

It belongs to the PurK/PurT family. As to quaternary structure, homodimer.

The catalysed reaction is 5-amino-1-(5-phospho-beta-D-ribosyl)imidazole + hydrogencarbonate + ATP = 5-carboxyamino-1-(5-phospho-D-ribosyl)imidazole + ADP + phosphate + 2 H(+). It functions in the pathway purine metabolism; IMP biosynthesis via de novo pathway; 5-amino-1-(5-phospho-D-ribosyl)imidazole-4-carboxylate from 5-amino-1-(5-phospho-D-ribosyl)imidazole (N5-CAIR route): step 1/2. Catalyzes the ATP-dependent conversion of 5-aminoimidazole ribonucleotide (AIR) and HCO(3)(-) to N5-carboxyaminoimidazole ribonucleotide (N5-CAIR). This chain is N5-carboxyaminoimidazole ribonucleotide synthase, found in Aquifex aeolicus (strain VF5).